Consider the following 258-residue polypeptide: Imidazole glycerol phosphate synthase subunit HisF (258 aa).

Residues D11 and D130 contribute to the active site.

This sequence belongs to the HisA/HisF family. As to quaternary structure, heterodimer of HisH and HisF.

It localises to the cytoplasm. The enzyme catalyses 5-[(5-phospho-1-deoxy-D-ribulos-1-ylimino)methylamino]-1-(5-phospho-beta-D-ribosyl)imidazole-4-carboxamide + L-glutamine = D-erythro-1-(imidazol-4-yl)glycerol 3-phosphate + 5-amino-1-(5-phospho-beta-D-ribosyl)imidazole-4-carboxamide + L-glutamate + H(+). It participates in amino-acid biosynthesis; L-histidine biosynthesis; L-histidine from 5-phospho-alpha-D-ribose 1-diphosphate: step 5/9. Functionally, IGPS catalyzes the conversion of PRFAR and glutamine to IGP, AICAR and glutamate. The HisF subunit catalyzes the cyclization activity that produces IGP and AICAR from PRFAR using the ammonia provided by the HisH subunit. The polypeptide is Imidazole glycerol phosphate synthase subunit HisF (Enterobacter sp. (strain 638)).